The primary structure comprises 150 residues: Ribonuclease K6 (150 aa).

A signal peptide spans Met-1–Ala-23. The active-site Proton acceptor is the His-38. 4 disulfide bridges follow: Cys-46–Cys-104, Cys-60–Cys-114, Cys-78–Cys-129, and Cys-85–Cys-92. Residue Asn-55 is glycosylated (N-linked (GlcNAc...) asparagine). Residues Lys-61–Thr-65 and Lys-86 each bind substrate. Asn-100 carries N-linked (GlcNAc...) asparagine glycosylation. Substrate is bound at residue Arg-105. The active-site Proton donor is the His-145.

The protein belongs to the pancreatic ribonuclease family. As to quaternary structure, interacts (via N-terminus) with bacterial lipopolysaccharide (LPS).

The protein localises to the secreted. Its subcellular location is the lysosome. The protein resides in the cytoplasmic granule. Ribonuclease which shows a preference for the pyrimidines uridine and cytosine. Has potent antibacterial activity against a range of Gram-positive and Gram-negative bacteria, including P.aeruginosa, A.baumanii, M.luteus, S.aureus, E.faecalis, E.faecium, S.saprophyticus and E.coli. Causes loss of bacterial membrane integrity, and also promotes agglutination of Gram-negative bacteria. Probably contributes to urinary tract sterility. Bactericidal activity is independent of RNase activity. The protein is Ribonuclease K6 (RNASE6) of Saimiri sciureus (Common squirrel monkey).